We begin with the raw amino-acid sequence, 266 residues long: Ribosomal RNA small subunit methyltransferase A (266 aa).

Positions 13, 15, 40, 61, 86, and 110 each coordinate S-adenosyl-L-methionine.

This sequence belongs to the class I-like SAM-binding methyltransferase superfamily. rRNA adenine N(6)-methyltransferase family. RsmA subfamily.

The protein localises to the cytoplasm. It catalyses the reaction adenosine(1518)/adenosine(1519) in 16S rRNA + 4 S-adenosyl-L-methionine = N(6)-dimethyladenosine(1518)/N(6)-dimethyladenosine(1519) in 16S rRNA + 4 S-adenosyl-L-homocysteine + 4 H(+). Its function is as follows. Specifically dimethylates two adjacent adenosines (A1518 and A1519) in the loop of a conserved hairpin near the 3'-end of 16S rRNA in the 30S particle. May play a critical role in biogenesis of 30S subunits. The sequence is that of Ribosomal RNA small subunit methyltransferase A from Hydrogenovibrio crunogenus (strain DSM 25203 / XCL-2) (Thiomicrospira crunogena).